Here is an 85-residue protein sequence, read N- to C-terminus: Large ribosomal subunit protein bL27 (85 aa).

Residues 1 to 21 (MAHKKGVGSSRNGRDSDGQRL) form a disordered region.

This sequence belongs to the bacterial ribosomal protein bL27 family.

This Citrifermentans bemidjiense (strain ATCC BAA-1014 / DSM 16622 / JCM 12645 / Bem) (Geobacter bemidjiensis) protein is Large ribosomal subunit protein bL27.